The following is a 388-amino-acid chain: Biotin synthase (388 aa).

One can recognise a Radical SAM core domain in the interval 47 to 277 (WFGRRVKLNY…DVEVRIAGGR (231 aa)). Residues C65, C69, and C72 each contribute to the [4Fe-4S] cluster site. C109, C142, C202, and R272 together coordinate [2Fe-2S] cluster. The tract at residues 335–371 (APAGGCGSEQSAGCGSHEGGGACGSAPAPRTDEARTD) is disordered.

This sequence belongs to the radical SAM superfamily. Biotin synthase family. As to quaternary structure, homodimer. Requires [4Fe-4S] cluster as cofactor. The cofactor is [2Fe-2S] cluster.

It catalyses the reaction (4R,5S)-dethiobiotin + (sulfur carrier)-SH + 2 reduced [2Fe-2S]-[ferredoxin] + 2 S-adenosyl-L-methionine = (sulfur carrier)-H + biotin + 2 5'-deoxyadenosine + 2 L-methionine + 2 oxidized [2Fe-2S]-[ferredoxin]. It participates in cofactor biosynthesis; biotin biosynthesis; biotin from 7,8-diaminononanoate: step 2/2. In terms of biological role, catalyzes the conversion of dethiobiotin (DTB) to biotin by the insertion of a sulfur atom into dethiobiotin via a radical-based mechanism. The protein is Biotin synthase of Streptomyces avermitilis (strain ATCC 31267 / DSM 46492 / JCM 5070 / NBRC 14893 / NCIMB 12804 / NRRL 8165 / MA-4680).